Reading from the N-terminus, the 156-residue chain is Probable chemoreceptor glutamine deamidase CheD (156 aa).

Belongs to the CheD family.

The enzyme catalyses L-glutaminyl-[protein] + H2O = L-glutamyl-[protein] + NH4(+). In terms of biological role, probably deamidates glutamine residues to glutamate on methyl-accepting chemotaxis receptors (MCPs), playing an important role in chemotaxis. The chain is Probable chemoreceptor glutamine deamidase CheD from Sulfurimonas denitrificans (strain ATCC 33889 / DSM 1251) (Thiomicrospira denitrificans (strain ATCC 33889 / DSM 1251)).